Consider the following 96-residue polypeptide: Large ribosomal subunit protein bL27 (96 aa).

The tract at residues 12 to 33 (HKGGGSSANGRNSAGRRLGAKA) is disordered. Over residues 19 to 28 (ANGRNSAGRR) the composition is skewed to low complexity.

The protein belongs to the bacterial ribosomal protein bL27 family.

The sequence is that of Large ribosomal subunit protein bL27 from Lactobacillus helveticus (strain DPC 4571).